The chain runs to 506 residues: MSIVILDFGSQFTRLITRRFRELGAYSVILPGTASLERIQQENPQGIVLSGGPSSVYDEGAPRPAPGVLDLNVPILGVCYGMQYLAHEAGGDVKRAGKREYGKADLTEYGGRLFEGIQGEFVAWMSHSDSVTQLPQGYQVVARTEHTPVTAIENNDTRRYGVQFHPEVVHTPKGGQMLANFLDICGVTRDWNAEHIVDELIEGVRAQVGDTGRVLLGISGGVDSSTLALLLAKAVGERLTAVFIDHGLLRLGEREQVEAALTPLGVNLVTVDAKDEFLGQLAGVSDPEQKRKIIGREFIRAFERETAKLGDFEFLAQGTLYPDVIESAGGEGAANIKSHHNVGGLPDDVQFKLVEPFRTLFKDEVREIARLLGLPDHIRMRHPFPGPGLAIRCLGEVTAEKVDILQRVDDIFISGLREFGLYDGCSQALAVLTPIQSVGVMGDERTYSYTAALRAVTTDDFMTAEWARLPYDFLATMSNRIVNQVHEINRVVYDITGKPPATIEWE.

The 189-residue stretch at serine 2 to aspartate 190 folds into the Glutamine amidotransferase type-1 domain. Cysteine 79 acts as the Nucleophile in catalysis. Residues histidine 165 and glutamate 167 contribute to the active site. Residues tryptophan 191–arginine 381 enclose the GMPS ATP-PPase domain. An ATP-binding site is contributed by serine 219 to serine 225.

Homodimer.

The enzyme catalyses XMP + L-glutamine + ATP + H2O = GMP + L-glutamate + AMP + diphosphate + 2 H(+). Its pathway is purine metabolism; GMP biosynthesis; GMP from XMP (L-Gln route): step 1/1. Catalyzes the synthesis of GMP from XMP. The polypeptide is GMP synthase [glutamine-hydrolyzing] (guaA) (Deinococcus radiodurans (strain ATCC 13939 / DSM 20539 / JCM 16871 / CCUG 27074 / LMG 4051 / NBRC 15346 / NCIMB 9279 / VKM B-1422 / R1)).